We begin with the raw amino-acid sequence, 45 residues long: Protein PsbN (45 aa).

Residues 12–30 (FLSRSLVSFTGYALYTAFG) form a helical membrane-spanning segment.

It belongs to the PsbN family.

The protein resides in the plastid. It localises to the chloroplast thylakoid membrane. Its function is as follows. May play a role in photosystem I and II biogenesis. The chain is Protein PsbN from Adiantum capillus-veneris (Maidenhair fern).